The sequence spans 405 residues: Argininosuccinate synthase (405 aa).

ATP-binding positions include 10-18 (AYSGGLDTS) and Ala37. L-citrulline-binding residues include Tyr88 and Ser93. Gly118 provides a ligand contact to ATP. 3 residues coordinate L-aspartate: Thr120, Asn124, and Asp125. Asn124 provides a ligand contact to L-citrulline. 5 residues coordinate L-citrulline: Arg128, Ser179, Ser188, Glu264, and Tyr276.

It belongs to the argininosuccinate synthase family. Type 1 subfamily. As to quaternary structure, homotetramer.

Its subcellular location is the cytoplasm. The enzyme catalyses L-citrulline + L-aspartate + ATP = 2-(N(omega)-L-arginino)succinate + AMP + diphosphate + H(+). Its pathway is amino-acid biosynthesis; L-arginine biosynthesis; L-arginine from L-ornithine and carbamoyl phosphate: step 2/3. The polypeptide is Argininosuccinate synthase (Pseudomonas putida (strain GB-1)).